The chain runs to 93 residues: Co-chaperonin GroES (93 aa).

The protein belongs to the GroES chaperonin family. Heptamer of 7 subunits arranged in a ring. Interacts with the chaperonin GroEL.

It localises to the cytoplasm. Its function is as follows. Together with the chaperonin GroEL, plays an essential role in assisting protein folding. The GroEL-GroES system forms a nano-cage that allows encapsulation of the non-native substrate proteins and provides a physical environment optimized to promote and accelerate protein folding. GroES binds to the apical surface of the GroEL ring, thereby capping the opening of the GroEL channel. The polypeptide is Co-chaperonin GroES (Streptococcus intermedius).